A 78-amino-acid polypeptide reads, in one-letter code: Small ribosomal subunit protein bS18A (78 aa).

Belongs to the bacterial ribosomal protein bS18 family. As to quaternary structure, part of the 30S ribosomal subunit. Forms a tight heterodimer with protein bS6.

In terms of biological role, binds as a heterodimer with protein bS6 to the central domain of the 16S rRNA, where it helps stabilize the platform of the 30S subunit. In Streptomyces avermitilis (strain ATCC 31267 / DSM 46492 / JCM 5070 / NBRC 14893 / NCIMB 12804 / NRRL 8165 / MA-4680), this protein is Small ribosomal subunit protein bS18A.